The sequence spans 388 residues: MNRRLVILVADSAGCGALPDAAAYGDAGSDTLGNTSRAVGGLSLPVLGRMGLGHVTAIQGVPPDPAPTAFHGRMAERSEGKDTTTGHWEMMGVVLRQGLRTFPGGFPPEIVEAFVRETGAPGVLGNTVASGTVIIQELGEEHQRTGKPIVYTSADSVFQVAAHTDTVPLETLYAWCRTARRILDPWRVARVIARPFVGAPGKYARTYDRKDFSMPPPATTVLERLVEAGVPVVGVGKIPDIFDRRGITEEIHTAGNADGLARTAALLDRVDRGLVFVNLVDFDMLYGHRNDPAGYARALEELDRALPAILDRLGPGDLLALTADHGCDPTTPSTDHSREHVPLLVYAPGRGGGDLGTRTTFADLGATVAEYFGVRSDVGTSFLAEVTR.

Positions 11, 283, 288, 324, 325, and 336 each coordinate Mn(2+).

It belongs to the phosphopentomutase family. Mn(2+) is required as a cofactor.

Its subcellular location is the cytoplasm. The catalysed reaction is 2-deoxy-alpha-D-ribose 1-phosphate = 2-deoxy-D-ribose 5-phosphate. It carries out the reaction alpha-D-ribose 1-phosphate = D-ribose 5-phosphate. Its pathway is carbohydrate degradation; 2-deoxy-D-ribose 1-phosphate degradation; D-glyceraldehyde 3-phosphate and acetaldehyde from 2-deoxy-alpha-D-ribose 1-phosphate: step 1/2. In terms of biological role, isomerase that catalyzes the conversion of deoxy-ribose 1-phosphate (dRib-1-P) and ribose 1-phosphate (Rib-1-P) to deoxy-ribose 5-phosphate (dRib-5-P) and ribose 5-phosphate (Rib-5-P), respectively. The polypeptide is Phosphopentomutase (Anaeromyxobacter sp. (strain K)).